The following is a 304-amino-acid chain: Ribosomal protein L11 methyltransferase (304 aa).

S-adenosyl-L-methionine-binding residues include threonine 152, glycine 173, aspartate 195, and asparagine 234.

It belongs to the methyltransferase superfamily. PrmA family.

Its subcellular location is the cytoplasm. The catalysed reaction is L-lysyl-[protein] + 3 S-adenosyl-L-methionine = N(6),N(6),N(6)-trimethyl-L-lysyl-[protein] + 3 S-adenosyl-L-homocysteine + 3 H(+). In terms of biological role, methylates ribosomal protein L11. This Cupriavidus metallidurans (strain ATCC 43123 / DSM 2839 / NBRC 102507 / CH34) (Ralstonia metallidurans) protein is Ribosomal protein L11 methyltransferase.